We begin with the raw amino-acid sequence, 867 residues long: Nitrate reductase [NADPH] (867 aa).

Positions 38–58 (DIPLPPPSKEPTEVLSIDKPT) are disordered. Cysteine 152 contributes to the Mo-molybdopterin binding site. The Cytochrome b5 heme-binding domain maps to 514 to 589 (NRIIDLQEFK…MPDYHIGTMD (76 aa)). 2 residues coordinate heme: histidine 549 and histidine 572. In terms of domain architecture, FAD-binding FR-type spans 615–726 (KSWTKATLVK…KGPTGRFEYL (112 aa)). Residues 669-672 (RSYT), 686-690 (LVKIY), phenylalanine 691, 700-702 (KMT), and threonine 753 contribute to the FAD site. 837–846 (MVLICGPEAM) is an NADP(+) binding site.

The protein belongs to the nitrate reductase family. Homodimer. It depends on FAD as a cofactor. The cofactor is heme. Mo-molybdopterin is required as a cofactor.

The catalysed reaction is nitrite + NADP(+) + H2O = nitrate + NADPH + H(+). In terms of biological role, nitrate reductase is a key enzyme involved in the first step of nitrate assimilation in plants, fungi and bacteria. This chain is Nitrate reductase [NADPH] (niaD), found in Aspergillus niger.